Here is a 164-residue protein sequence, read N- to C-terminus: Thiol peroxidase (164 aa).

A Thioredoxin domain is found at 18–163; the sequence is INEGDFAPDF…FDAALAAYKN (146 aa). The active-site Cysteine sulfenic acid (-SOH) intermediate is Cys-60. Cys-60 and Cys-93 form a disulfide bridge.

This sequence belongs to the peroxiredoxin family. Tpx subfamily. Homodimer.

The catalysed reaction is a hydroperoxide + [thioredoxin]-dithiol = an alcohol + [thioredoxin]-disulfide + H2O. Its function is as follows. Thiol-specific peroxidase that catalyzes the reduction of hydrogen peroxide and organic hydroperoxides to water and alcohols, respectively. Plays a role in cell protection against oxidative stress by detoxifying peroxides. In Staphylococcus aureus (strain COL), this protein is Thiol peroxidase.